The sequence spans 733 residues: Polyribonucleotide nucleotidyltransferase (733 aa).

The interval 404 to 424 (NYNMPPYSTGETGRVGSPKRR) is disordered. Mg(2+) is bound by residues D516 and D522. Residues 582 to 641 (PRIITVHIPVDKIGEVIGPKGKMINQIQDDTGANISIEDDGTIFIGADNGDSAESARSMI) form the KH domain. Residues 653–725 (GERYLGTVVK…DRGKLSLVLA (73 aa)) enclose the S1 motif domain.

This sequence belongs to the polyribonucleotide nucleotidyltransferase family. Mg(2+) serves as cofactor.

The protein resides in the cytoplasm. The catalysed reaction is RNA(n+1) + phosphate = RNA(n) + a ribonucleoside 5'-diphosphate. Functionally, involved in mRNA degradation. Catalyzes the phosphorolysis of single-stranded polyribonucleotides processively in the 3'- to 5'-direction. In Cutibacterium acnes (strain DSM 16379 / KPA171202) (Propionibacterium acnes), this protein is Polyribonucleotide nucleotidyltransferase.